The following is a 247-amino-acid chain: Probable 2-phosphosulfolactate phosphatase (247 aa).

It belongs to the ComB family. Mg(2+) is required as a cofactor.

The catalysed reaction is (2R)-O-phospho-3-sulfolactate + H2O = (2R)-3-sulfolactate + phosphate. In Clostridium perfringens (strain SM101 / Type A), this protein is Probable 2-phosphosulfolactate phosphatase.